A 1001-amino-acid polypeptide reads, in one-letter code: E3 ubiquitin-protein ligase BRE1B (1001 aa).

The tract at residues 1–31 (MSGLGNKRAAGDGGSGPPEKKLSREEKTTTT) is disordered. The segment covering 18–28 (PEKKLSREEKT) has biased composition (basic and acidic residues). Lys20 is subject to N6-acetyllysine. Ser42 is modified (phosphoserine). A coiled-coil region spans residues 45 to 91 (EEIDLKVLQFKNKKLAERLEQRQACEDELRERIEKLEKRQATDDATL). Positions 116-149 (GELSSAPEAPGTQEGPTCDGTPLPEPGTSELREP) are disordered. Coiled coils occupy residues 228–377 (ARTR…LRSL) and 437–523 (LQKK…AQTS). An N6-acetyllysine mark is found at Lys355 and Lys517. Residues 516–646 (GKLRAQTSGS…EKAKVEEAKR (131 aa)) form a disordered region. Positions 520–531 (AQTSGSTHSTPN) are enriched in polar residues. Ser528 is modified (phosphoserine). Glycyl lysine isopeptide (Lys-Gly) (interchain with G-Cter in SUMO2) cross-links involve residues Lys578 and Lys579. Ser585 carries the post-translational modification Phosphoserine. Basic and acidic residues-rich tracts occupy residues 602–619 (RGRE…EREG) and 633–646 (RADR…EAKR). Residues 627-946 (VASALSRADR…EEIKEYKARL (320 aa)) are a coiled coil. An RING-type zinc finger spans residues 948–987 (CPCCNTRKKDAVLTKCFHVFCFECVRGRYEARQRKCPKCN).

Belongs to the BRE1 family. In terms of assembly, component of the RNF20/40 complex (also known as BRE1 complex) probably composed of 2 copies of RNF20/BRE1A and 2 copies of RNF40/BRE1B. Interacts with UBE2E1/UBCH6. Interacts with RB1 and WAC.

The protein resides in the nucleus. It catalyses the reaction S-ubiquitinyl-[E2 ubiquitin-conjugating enzyme]-L-cysteine + [acceptor protein]-L-lysine = [E2 ubiquitin-conjugating enzyme]-L-cysteine + N(6)-ubiquitinyl-[acceptor protein]-L-lysine.. Its pathway is protein modification; protein ubiquitination. In terms of biological role, component of the RNF20/40 E3 ubiquitin-protein ligase complex that mediates monoubiquitination of 'Lys-120' of histone H2B (H2BK120ub1). H2BK120ub1 gives a specific tag for epigenetic transcriptional activation and is also prerequisite for histone H3 'Lys-4' and 'Lys-79' methylation (H3K4me and H3K79me, respectively). It thereby plays a central role in histone code and gene regulation. The RNF20/40 complex forms a H2B ubiquitin ligase complex in cooperation with the E2 enzyme UBE2A or UBE2B; reports about the cooperation with UBE2E1/UBCH are contradictory. Required for transcriptional activation of Hox genes. The protein is E3 ubiquitin-protein ligase BRE1B (RNF40) of Macaca fascicularis (Crab-eating macaque).